The following is a 146-amino-acid chain: Hemoglobin subunit beta (146 aa).

The residue at position 1 (Val1) is an N-acetylvaline. The 145-residue stretch at 2–146 (HLTAEEKAAV…VANALAHKYH (145 aa)) folds into the Globin domain. At Thr12 the chain carries Phosphothreonine. Residue Ser44 is modified to Phosphoserine. Lys59 carries the N6-acetyllysine modification. Residue His63 coordinates heme b. Lys82 bears the N6-acetyllysine mark. His92 serves as a coordination point for heme b. An S-nitrosocysteine modification is found at Cys93. An N6-acetyllysine modification is found at Lys144.

It belongs to the globin family. As to quaternary structure, heterotetramer of two alpha chains and two beta chains. As to expression, red blood cells.

Involved in oxygen transport from the lung to the various peripheral tissues. The chain is Hemoglobin subunit beta (HBB) from Mellivora capensis (Ratel).